The sequence spans 258 residues: Thrombin-like enzyme ancrod-2 (258 aa).

Residues 1 to 18 (MVLIRVLANLVILQLSYA) form the signal peptide. Positions 19–24 (QKSSEL) are excised as a propeptide. The Peptidase S1 domain maps to 25 to 251 (VIGGDECNIN…HLHWILSIMA (227 aa)). Intrachain disulfides connect C31/C165, C52/C68, C102/C256, C144/C212, C176/C191, and C202/C227. Residues H67 and D112 each act as charge relay system in the active site. N-linked (GlcNAc...) asparagine glycans are attached at residues N123 and N172. The Charge relay system role is filled by S206. A glycan (N-linked (GlcNAc...) asparagine) is linked at N253.

Belongs to the peptidase S1 family. Snake venom subfamily. As to quaternary structure, monomer. Expressed by the venom gland.

It is found in the secreted. The catalysed reaction is Selective cleavage of Arg-|-Xaa bond in fibrinogen, to form fibrin, and release fibrinopeptide A. The specificity of further degradation of fibrinogen varies with species origin of the enzyme.. Its function is as follows. Thrombin-like snake venom serine protease. Cleaves fibrinogen (FGA) to split of fibrinopeptides AM, AO, and AY; the aberrant fibrinogen is then incapable of being cross-linked, forming easily dispersible clots. This is Thrombin-like enzyme ancrod-2 from Calloselasma rhodostoma (Malayan pit viper).